The chain runs to 212 residues: Glycerol-3-phosphate acyltransferase (212 aa).

6 helical membrane passes run 8–28, 59–79, 90–110, 122–142, 148–168, and 169–189; these read IFLSAALIALAYLIGSIPFAV, AAAALTLLGDAFKGWFALWLA, VFALVALAAFLGHLYPVFLGF, ILLAIHPGLALATAATWVIIA, SSLAALVAAFFAPVYYLFGSG, and VAWYAQGPVGVALAIITLLLF.

This sequence belongs to the PlsY family. Probably interacts with PlsX.

It localises to the cell inner membrane. It carries out the reaction an acyl phosphate + sn-glycerol 3-phosphate = a 1-acyl-sn-glycero-3-phosphate + phosphate. It participates in lipid metabolism; phospholipid metabolism. Functionally, catalyzes the transfer of an acyl group from acyl-phosphate (acyl-PO(4)) to glycerol-3-phosphate (G3P) to form lysophosphatidic acid (LPA). This enzyme utilizes acyl-phosphate as fatty acyl donor, but not acyl-CoA or acyl-ACP. The chain is Glycerol-3-phosphate acyltransferase from Bordetella petrii (strain ATCC BAA-461 / DSM 12804 / CCUG 43448).